The chain runs to 33 residues: Toxin BcV (33 aa).

A disulfide bridge links cysteine 6 with cysteine 30.

It localises to the secreted. The protein resides in the nematocyst. In terms of biological role, potently and reversibly blocks mammalian Kv11/KCNH/ERG voltage-gated potassium channels. Acts as a gating-modifier toxin that shifts the voltage-dependence of ERG activation in the positive direction and suppresses its current amplitudes elicited by strong depolarizing pulses that maximally activate the channels. In Bunodosoma caissarum (Sea anemone), this protein is Toxin BcV.